The sequence spans 249 residues: Aliphatic sulfonates import ATP-binding protein SsuB 2 (249 aa).

One can recognise an ABC transporter domain in the interval 5–233; it reads LDLLEIRKAY…PRDRRAVELA (229 aa). 37 to 44 is an ATP binding site; the sequence is GPSGCGKS.

The protein belongs to the ABC transporter superfamily. Aliphatic sulfonates importer (TC 3.A.1.17.2) family. In terms of assembly, the complex is composed of two ATP-binding proteins (SsuB), two transmembrane proteins (SsuC) and a solute-binding protein (SsuA).

The protein resides in the cell inner membrane. The catalysed reaction is ATP + H2O + aliphatic sulfonate-[sulfonate-binding protein]Side 1 = ADP + phosphate + aliphatic sulfonateSide 2 + [sulfonate-binding protein]Side 1.. Its function is as follows. Part of the ABC transporter complex SsuABC involved in aliphatic sulfonates import. Responsible for energy coupling to the transport system. This Pseudomonas aeruginosa (strain ATCC 15692 / DSM 22644 / CIP 104116 / JCM 14847 / LMG 12228 / 1C / PRS 101 / PAO1) protein is Aliphatic sulfonates import ATP-binding protein SsuB 2.